The following is a 604-amino-acid chain: NRPS-independent siderophore synthetase-like protein ankE (604 aa).

The catalysed reaction is cyclo(L-arginyl-(Z)-dehydro-4-O-homoseryl-tyrosyl) + citrate + ATP = NK13650 B + AMP + diphosphate + H(+). It participates in secondary metabolite biosynthesis. NRPS-independent siderophore synthetase-like protein; part of the ank cluster that mediates the biosynthesis of NK13650 C, a highly modified cyclo-arginine-tyrosine dipeptide. AnkE is responsible of the production of NK13650 B via ligation of citrate to the ankD product. Within the pathway, the cyclodipeptide synthase ankA acts as the scaffold-generating enzyme and is responsible for formation of the cyclo-Arg-Tyr diketopiperazine (cRY) from L-Arg and L-Tyr. The ankA product cRY is desaturated by the cytochrome P450 monooxygenase ankB to yield a dehydro-cyclodipeptide intermediate. The FAD-dependent monooxygenase ankC then installs the m-OH, ankD catalyzes the attachment of L-homoserine, and ankE ligates citrate to the ankD product to yield NK13650 B. The O-methyltransferase ankF is responsible for methylation of the C-17 phenol group of NK13650 B to produce NK13650 D. Amidation of NK13650 D with L-Asp by ankG then leads to the production of NK13650 C, whereas amidation of NK13650 B produces NK13650 A. The chain is NRPS-independent siderophore synthetase-like protein ankE from Aspergillus thermomutatus (Neosartorya pseudofischeri).